Here is a 60-residue protein sequence, read N- to C-terminus: MNNAKIWTVVKPSTGIPLILGAVAVAALIVHAGLLTNTTWFANYWNGNPMATVVAVAPAQ.

The Cytoplasmic portion of the chain corresponds to 1-14 (MNNAKIWTVVKPST). Residues 15 to 35 (GIPLILGAVAVAALIVHAGLL) form a helical membrane-spanning segment. Residue His-31 participates in a bacteriochlorophyll binding. Residues 36–60 (TNTTWFANYWNGNPMATVVAVAPAQ) lie on the Periplasmic side of the membrane.

This sequence belongs to the antenna complex alpha subunit family. As to quaternary structure, the core complex is formed by different alpha and beta chains, binding bacteriochlorophyll molecules, and arranged most probably in tetrameric structures disposed around the reaction center. The non-pigmented gamma chains may constitute additional components.

It localises to the cell inner membrane. Its function is as follows. Antenna complexes are light-harvesting systems, which transfer the excitation energy to the reaction centers. The polypeptide is Light-harvesting protein B-800/850 alpha chain (pucA) (Rhodobacter capsulatus (Rhodopseudomonas capsulata)).